Reading from the N-terminus, the 541-residue chain is Protein yellow (541 aa).

An N-terminal signal peptide occupies residues 1–21; the sequence is MFQDKGWVLLTLITLVSPSWA. Asn144 carries an N-linked (GlcNAc...) asparagine glycan.

It belongs to the major royal jelly protein family.

The protein resides in the secreted. In terms of biological role, controls the pigmentation pattern of the adult cuticle and larval mouth parts. This is Protein yellow (y) from Drosophila yakuba (Fruit fly).